The chain runs to 154 residues: uncharacterized protein (154 aa).

Zn(2+)-binding residues include Cys-4, Cys-7, Cys-16, Cys-19, Cys-24, Cys-28, His-32, and Cys-36. The HIT-type zinc finger occupies 4–36 (CSICNESEIKYKCPKCSFPYCSLPCWKIHQSQC).

This is an uncharacterized protein from Schizosaccharomyces pombe (strain 972 / ATCC 24843) (Fission yeast).